The primary structure comprises 171 residues: Dual specificity protein phosphatase OPG106 (171 aa).

The 149-residue stretch at serine 23–asparagine 171 folds into the Tyrosine-protein phosphatase domain. Cysteine 110 acts as the Phosphocysteine intermediate in catalysis.

This sequence belongs to the protein-tyrosine phosphatase family. Non-receptor class dual specificity subfamily. As to quaternary structure, homodimer.

It localises to the virion. It is found in the host cytoplasm. The catalysed reaction is O-phospho-L-tyrosyl-[protein] + H2O = L-tyrosyl-[protein] + phosphate. The enzyme catalyses O-phospho-L-seryl-[protein] + H2O = L-seryl-[protein] + phosphate. With respect to regulation, inhibited by NSC-62914, NSC-28086, NSC-105687, NSC-23173, 540211 and 217691 with IC50 values of 48, 51, 212, 342, 4 and 11 uM, respectively. Its function is as follows. Serine/tyrosine phosphatase which down-regulates cellular antiviral response by dephosphorylating activated host STAT1 and blocking interferon (IFN)-stimulated innate immune responses. Dephosphorylates the OPG144 protein. This chain is Dual specificity protein phosphatase OPG106 (OPG106), found in Homo sapiens (Human).